Here is a 547-residue protein sequence, read N- to C-terminus: CAP-Gly domain-containing linker protein 3 (547 aa).

Residues 1–49 form a disordered region; sequence MTKTDPAPMAPPPRGEEEEEEEEDEPVPEAPSPTQERRQKPVVHPSAPA. A compositionally biased stretch (acidic residues) spans 16–27; it reads EEEEEEEEDEPV. ANK repeat units lie at residues 117–155, 160–189, and 197–226; these read TDMTLLHYACKAGAHGVGDPAAAVRLSQQLLALGADVTL, TNMNALHYAAYFDVPDLVRVLLKGARPRVV, and NHGSALHIAASSLCLGAAKCLLEHGANPAL. The CAP-Gly 1 domain maps to 314–356; the sequence is GTTEFASGQWVGVELDEPEGKNDGSVGGVRYFICPPKQGLFAS. The interval 365–413 is disordered; sequence DAPPSSVTSTPRTPRMDFSRVTGKGRREHKGKKKTPSSPSLGSLQQRDR. The segment covering 367-377 has biased composition (low complexity); it reads PPSSVTSTPRT. T374 bears the Phosphothreonine mark. Positions 387 to 399 are enriched in basic residues; that stretch reads GKGRREHKGKKKT. The span at 400–409 shows a compositional bias: polar residues; the sequence is PSSPSLGSLQ. Residue S401 is modified to Phosphoserine. The 43-residue stretch at 436–478 folds into the CAP-Gly 2 domain; that stretch reads GKTDFAPGYWYGIELDQPTGKHDGSVFGVRYFTCPPRHGVFAP. The goLD stretch occupies residues 488–547; the sequence is STDSPGDSVGAKKVHQVTMTQPKRTFTTVRTPKDIASENSISRLLFCCWFPWMLRAEMQS. Residues C534 and C535 are each lipidated (S-palmitoyl cysteine).

In terms of assembly, homodimer. Interacts with AKT1 and AKT2; when AKT1 and AKT2 are phosphorylated and activated, affinity is higher for AKT2. Interacts with ZDHHC13 (via ANK repeats). Interacts with ZDHHC17 (via ANK repeats). In terms of processing, palmitoylation by ZDHHC17 regulates association with the plasma membrane.

Its subcellular location is the cell membrane. It is found in the cytoplasm. The protein localises to the golgi apparatus. It localises to the golgi stack. Its function is as follows. Functions as a cytoplasmic linker protein. Involved in TGN-endosome dynamics. May modulate the cellular compartmentalization of AKT kinase family and promote its cell membrane localization, thereby playing a role in glucose transport in adipocytes. This is CAP-Gly domain-containing linker protein 3 (CLIP3) from Pongo abelii (Sumatran orangutan).